We begin with the raw amino-acid sequence, 479 residues long: ATP synthase subunit beta (479 aa).

168–175 is a binding site for ATP; it reads GGAGVGKT.

Belongs to the ATPase alpha/beta chains family. As to quaternary structure, F-type ATPases have 2 components, CF(1) - the catalytic core - and CF(0) - the membrane proton channel. CF(1) has five subunits: alpha(3), beta(3), gamma(1), delta(1), epsilon(1). CF(0) has three main subunits: a(1), b(2) and c(9-12). The alpha and beta chains form an alternating ring which encloses part of the gamma chain. CF(1) is attached to CF(0) by a central stalk formed by the gamma and epsilon chains, while a peripheral stalk is formed by the delta and b chains.

The protein localises to the cell membrane. It carries out the reaction ATP + H2O + 4 H(+)(in) = ADP + phosphate + 5 H(+)(out). Its function is as follows. Produces ATP from ADP in the presence of a proton gradient across the membrane. The catalytic sites are hosted primarily by the beta subunits. The polypeptide is ATP synthase subunit beta (Parafrankia sp. (strain EAN1pec)).